The chain runs to 82 residues: Small ribosomal subunit protein bS16 (82 aa).

This sequence belongs to the bacterial ribosomal protein bS16 family.

This is Small ribosomal subunit protein bS16 from Klebsiella pneumoniae (strain 342).